The primary structure comprises 116 residues: Large ribosomal subunit protein bL20 (116 aa).

Belongs to the bacterial ribosomal protein bL20 family.

Functionally, binds directly to 23S ribosomal RNA and is necessary for the in vitro assembly process of the 50S ribosomal subunit. It is not involved in the protein synthesizing functions of that subunit. The polypeptide is Large ribosomal subunit protein bL20 (Desulfosudis oleivorans (strain DSM 6200 / JCM 39069 / Hxd3) (Desulfococcus oleovorans)).